The sequence spans 204 residues: Ras-related protein RabL (204 aa).

Gly-14–Thr-21 serves as a coordination point for GTP. The Effector region motif lies at Arg-36 to Tyr-44. GTP-binding positions include Asp-62–Gln-66 and Thr-120–Asp-123. Residues Cys-203 and Cys-204 are each lipidated (S-geranylgeranyl cysteine).

The protein belongs to the small GTPase superfamily. Rab family.

It localises to the cell membrane. The sequence is that of Ras-related protein RabL (rabL) from Dictyostelium discoideum (Social amoeba).